The following is a 707-amino-acid chain: Protein MICRORCHIDIA 7 (707 aa).

2 stretches are compositionally biased toward basic and acidic residues: residues 1 to 11 (MDNSIHVKREI) and 575 to 587 (DNRDSSPENDREG). Disordered stretches follow at residues 1–22 (MDNSIHVKREIQLPSTSPAGFP) and 568–619 (EKSA…SGKD). Positions 590-613 (SIKTPTPASDKFYSSSYPNHNGDN) are enriched in polar residues. Residues 620–701 (GARLQEELRR…NKIKKMEGSK (82 aa)) adopt a coiled-coil conformation. The Nuclear localization signal motif lies at 633-640 (RRKALEVE).

It belongs to the MORC ATPase protein family. In terms of assembly, homodimer and heterodimer. Component of an RNA-directed DNA methylation (RdDM) complex. Forms homomeric complexes. Mg(2+) serves as cofactor. The cofactor is Mn(2+).

The protein localises to the nucleus. Exhibits ATPase activity. Binds DNA/RNA in a non-specific manner and exhibits endonuclease activity. Probably involved in DNA repair. Involved in RNA-directed DNA methylation (RdDM) as a component of the RdDM machinery and required for gene silencing. May also be involved in the regulation of chromatin architecture to maintain gene silencing. Together with MORC4, acts to suppress a wide set of non-methylated protein-coding genes, especially involved in pathogen response. Positive regulators of defense against the oomycete Hyaloperonospora arabidopsidis (Hpa). The protein is Protein MICRORCHIDIA 7 of Arabidopsis thaliana (Mouse-ear cress).